The chain runs to 495 residues: UDP-glycosyltransferase 73C13 (495 aa).

His24 serves as the catalytic Proton acceptor. Residue His24 coordinates an anthocyanidin. The Charge relay role is filled by Asp129. Residues Ala356, Gln358, His373, Trp376, Asn377, Ser378, and Glu381 each coordinate UDP-alpha-D-glucose. Ala396 contributes to the an anthocyanidin binding site. The UDP-alpha-D-glucose site is built by Asp397 and Gln398.

Belongs to the UDP-glycosyltransferase family.

It catalyses the reaction oleanolate + UDP-alpha-D-glucose = oleanolate 3-O-beta-D-glucoside + UDP + H(+). In terms of biological role, catalyzes the transfer of a glucose (Glc) moiety from UDP-Glc to the C-3 position of the oleanane sapogenins oleanolate and hederagenin, and to the C-28 carboxylic group of the lupane sapogenin betulinate. The monoglucosylated hederagenin 3-O-beta-D-glucoside is a feeding deterrent of the yellow-striped flea beetle (Phyllotreta nemorum). The sequence is that of UDP-glycosyltransferase 73C13 from Barbarea vulgaris (Yellow rocket).